A 732-amino-acid chain; its full sequence is Protein DIA2 (732 aa).

3 TPR repeats span residues 15-48 (VLKAIELGTRLFKSGEYLQAKRIFTNALRVCDSY), 78-111 (IKILDNICACYEKLNDLKSCLDVSQRLLKLEPGN), and 113-145 (KCYIRCTRTLIKLKDWKRAYKTCSRGLQLCNND). The region spanning 204 to 251 (TDLVGNLPIEILPIIFQRFTTKELVTLSLVCNKWRDKILYHLDCFQEF) is the F-box domain. Ser393 bears the Phosphoserine mark. LRR repeat units follow at residues 425–449 (LEKITLICDKKKIKNFPLCRALLRG), 480–505 (FPDLKELWIEDNDNCELSKFLQLLKF), 509–532 (WKNLEKLTFRENKLYPIVNLDEDQ), 550–574 (LQNLEKLDLMGTSISGSALTRLCEQ), 579–602 (GRKLRSLNIGNCPNIQFPNNHAHT), 616–637 (LSKLEEINLSHLSSLNDSTMKS), and 645–669 (LENLKRLDISHNFEITGISIYEFLK).

It belongs to the DIA2 family. In terms of assembly, component of the SCF(DIA2) complex containing CDC53, SKP1, RBX1 and DIA2. Interacts with SKP1.

Its subcellular location is the nucleus. Functionally, F-box protein component of a SCF (SKP1-CUL1-F-box protein) E3 ubiquitin-protein ligase complex which mediates the ubiquitination and subsequent proteasomal degradation of target proteins. Probably recognizes and binds to phosphorylated target proteins. The SCF(DIA2) complex is specifically involved in the pheromone induced degradation of phosphorylated TEC1. The SCF(DIA2) complex binds to DNA replication origins. Involved in DNA replication, genome stability, and the control of cell cycle, probably through its association to replication origins to facilitate the ubiquitination of another origin-binding protein. Required for invasive growth and growth under alkaline conditions. The chain is Protein DIA2 (DIA2) from Saccharomyces cerevisiae (strain ATCC 204508 / S288c) (Baker's yeast).